Reading from the N-terminus, the 117-residue chain is Photosystem II reaction center Psb28 protein (117 aa).

It belongs to the Psb28 family. Part of the photosystem II complex.

It localises to the cellular thylakoid membrane. The polypeptide is Photosystem II reaction center Psb28 protein (Prochlorococcus marinus subsp. pastoris (strain CCMP1986 / NIES-2087 / MED4)).